A 354-amino-acid polypeptide reads, in one-letter code: Guanine nucleotide-binding protein G(i) subunit alpha-1 (354 aa).

Gly2 carries N-myristoyl glycine lipidation. Cys3 is lipidated: S-palmitoyl cysteine. One can recognise a G-alpha domain in the interval 32–354; it reads REVKLLLLGA…KNNLKDCGLF (323 aa). The tract at residues 35–48 is G1 motif; sequence KLLLLGAGESGKST. GTP is bound by residues 43–48, 150–151, and 175–178; these read ESGKST, DS, and LRTR. Mg(2+) is bound at residue Ser47. A G2 motif region spans residues 173 to 181; that stretch reads DVLRTRVKT. Thr181 contacts Mg(2+). A G3 motif region spans residues 196–205; the sequence is FKMFDVGGQR. GTP is bound by residues 200–204, 269–272, and Ala326; these read DVGGQ and NKKD. The interval 265-272 is G4 motif; the sequence is ILFLNKKD. The segment at 324–329 is G5 motif; sequence TCATDT.

Belongs to the G-alpha family. G(i/o/t/z) subfamily. In terms of assembly, heterotrimeric G proteins are composed of 3 units; alpha, beta and gamma. The alpha chain contains the guanine nucleotide binding site. Part of a spindle orientation complex at least composed of GNAI1, GPSM2 and NUMA1. Identified in complex with the beta subunit GNB1 and the gamma subunit GNG1. Identified in complex with the beta subunit GNB1 and the gamma subunit GNG2. Component of the TAS2R14-GNAI1 complex, consisting of TAS2R14, GNAI1, GNB1 and GNG2; within the complex interacts with TAS2R14; this complex plays a role in the perception of bitterness. GTP binding causes dissociation of the heterotrimer, liberating the individual subunits so that they can interact with downstream effector proteins. Interacts (GDP-bound form) with GPSM1; this inhibits guanine nucleotide exchange and GTP binding. Interacts (GDP-bound form) with GPSM2 (via GoLoco domains); this inhibits guanine nucleotide exchange. Interacts with RGS10; this strongly enhances GTP hydrolysis. Interacts with RGS1 and RGS16. Interacts with RGS4. Interacts with RGS12. Interacts (via active GTP- or inactive GDP-bound forms) with RGS14 (via RGS and GoLoco domains). Interacts with RGS3, RGS6, RGS7, RGS8, RGS17, RGS18 and RGS20 (in vitro). Interacts (GDP-bound form) with RIC8A (via C-terminus); promoting GNAI1 folding and association with the plasma membrane. Interacts (inactive GDP-bound form) with NUCB1 (via GBA motif); the interaction leads to activation of GNAI1. Interacts (inactive GDP-bound form) with CCDC88C/DAPLE (via GBA motif); the interaction leads to activation of GNAI1. Interacts (inactive GDP-bound form) with CCDC8A/GIV (via GBA motif). Interacts with GPR15. Post-translationally, myristoylation at Gly-2 is required for membrane anchoring before palmitoylation. In terms of processing, palmitoylation at Cys-3 varies with membrane lipid composition.

It localises to the nucleus. The protein resides in the cytoplasm. The protein localises to the cell membrane. It is found in the cytoskeleton. Its subcellular location is the microtubule organizing center. It localises to the centrosome. The protein resides in the cell cortex. The protein localises to the membrane. It carries out the reaction GTP + H2O = GDP + phosphate + H(+). Functionally, guanine nucleotide-binding proteins (G proteins) function as transducers downstream of G protein-coupled receptors (GPCRs) in numerous signaling cascades. The alpha chain contains the guanine nucleotide binding site and alternates between an active, GTP-bound state and an inactive, GDP-bound state. Signaling by an activated GPCR promotes GDP release and GTP binding. The alpha subunit has a low GTPase activity that converts bound GTP to GDP, thereby terminating the signal. Both GDP release and GTP hydrolysis are modulated by numerous regulatory proteins. Signaling is mediated via effector proteins, such as adenylate cyclase. Inhibits adenylate cyclase activity of ADCY1, ADCY5 and ADCY6, leading to decreased intracellular cAMP levels. The inactive GDP-bound form prevents the association of RGS14 with centrosomes and is required for the translocation of RGS14 from the cytoplasm to the plasma membrane. Required for normal cytokinesis during mitosis. Required for cortical dynein-dynactin complex recruitment during metaphase. In Rattus norvegicus (Rat), this protein is Guanine nucleotide-binding protein G(i) subunit alpha-1 (Gnai1).